Reading from the N-terminus, the 385-residue chain is Leucine aminopeptidase 1 (385 aa).

An N-terminal signal peptide occupies residues 1 to 19 (MKFPSFLSLGIAASTTALA). Positions 20-87 (ALPDQKPIGD…FPRAFAKTAV (68 aa)) are excised as a propeptide. An N-linked (GlcNAc...) asparagine glycan is attached at N177. Residues H185 and D204 each contribute to the Zn(2+) site. An N-linked (GlcNAc...) asparagine glycan is attached at N229. 2 residues coordinate Zn(2+): E243 and D270. An intrachain disulfide couples C319 to C323. H352 provides a ligand contact to Zn(2+).

This sequence belongs to the peptidase M28 family. M28E subfamily. In terms of assembly, monomer. Zn(2+) is required as a cofactor.

Its subcellular location is the secreted. In terms of biological role, extracellular aminopeptidase that allows assimilation of proteinaceous substrates. This chain is Leucine aminopeptidase 1 (LAP1), found in Ajellomyces dermatitidis (strain ER-3 / ATCC MYA-2586) (Blastomyces dermatitidis).